Consider the following 232-residue polypeptide: Peptidyl-prolyl cis-trans isomerase FKBP18, chloroplastic (232 aa).

The 119-residue stretch at 108–226 (GSTAQVHFDC…ELNIELLRVT (119 aa)) folds into the PPIase FKBP-type domain.

It belongs to the FKBP-type PPIase family.

Its subcellular location is the plastid. The protein resides in the chloroplast thylakoid lumen. It catalyses the reaction [protein]-peptidylproline (omega=180) = [protein]-peptidylproline (omega=0). Functionally, PPIases accelerate the folding of proteins. It catalyzes the cis-trans isomerization of proline imidic peptide bonds in oligopeptides. In Arabidopsis thaliana (Mouse-ear cress), this protein is Peptidyl-prolyl cis-trans isomerase FKBP18, chloroplastic (FKBP18).